A 273-amino-acid polypeptide reads, in one-letter code: MSVHTTKRRLSPASIESLKGDRPIVSLTAYTTPIARLLDPHVDFLLVGDSLGMVLYGLDTTVGVTLDMMIAHGQAVMRGSERCCVVVDLPFGAYQESKEQAFRSAARILKETGCSAVKLEGGAEMAETVEFLVSRGIPVLGHVGLMPQLVNTTGGYRSVGRNEKEVAKIRRDAKAIDDAGAFAIVVEGTVEPVAREITATLRAPTIGIGASPACDGQILVSDDMLGLFNDFKPRFVKHFAELAPAISKAVEDYANEVKARTFPGIEHTFQVKR.

Mg(2+) contacts are provided by Asp49 and Asp88. Residues 49–50 (DS), Asp88, and Lys118 each bind 3-methyl-2-oxobutanoate. Glu120 lines the Mg(2+) pocket. The active-site Proton acceptor is Glu187.

This sequence belongs to the PanB family. Homodecamer; pentamer of dimers. Mg(2+) serves as cofactor.

The protein resides in the cytoplasm. The enzyme catalyses 3-methyl-2-oxobutanoate + (6R)-5,10-methylene-5,6,7,8-tetrahydrofolate + H2O = 2-dehydropantoate + (6S)-5,6,7,8-tetrahydrofolate. It participates in cofactor biosynthesis; (R)-pantothenate biosynthesis; (R)-pantoate from 3-methyl-2-oxobutanoate: step 1/2. Catalyzes the reversible reaction in which hydroxymethyl group from 5,10-methylenetetrahydrofolate is transferred onto alpha-ketoisovalerate to form ketopantoate. This Sinorhizobium medicae (strain WSM419) (Ensifer medicae) protein is 3-methyl-2-oxobutanoate hydroxymethyltransferase.